Consider the following 1031-residue polypeptide: NACHT, LRR and PYD domains-containing protein 3 (1031 aa).

The Pyrin domain occupies 1–93; that stretch reads MRMVSVRCKL…YEKAKREEPE (93 aa). Residue Ser5 is modified to Phosphoserine. Residue Tyr13 is modified to Phosphotyrosine. Cys125 is lipidated: S-palmitoyl cysteine. Residues 126–129 are required for binding to phosphatidylinositol 4-phosphate (PtdIns4P); sequence RKKK. Residues Tyr131, Tyr135, and Tyr138 each carry the phosphotyrosine modification. One can recognise an FISNA domain in the interval 135 to 207; the sequence is YRKYVRSKFQ…SSVNLELLFD (73 aa). The residue at position 156 (Ser156) is a Phosphoserine. ATP is bound at residue Thr164. Phosphoserine is present on residues Ser195 and Ser198. The region spanning 217-533 is the NACHT domain; sequence HTVVFQGAAG…EFFAAMYYLL (317 aa). 223-230 serves as a coordination point for ATP; sequence GAAGIGKT. 2 positions are modified to phosphoserine: Ser262 and Ser292. Lys321 is covalently cross-linked (Glycyl lysine isopeptide (Lys-Gly) (interchain with G-Cter in ubiquitin)). Phosphoserine is present on Ser331. Positions 352 to 356 match the KFERQ-like motif 1 motif; that stretch reads LEKLQ. Residue Lys427 forms a Glycyl lysine isopeptide (Lys-Gly) (interchain with G-Cter in ubiquitin) linkage. Residue His519 coordinates ATP. The short motif at 601–605 is the KFERQ-like motif 2 element; the sequence is KIRLE. Lys687 participates in a covalent cross-link: Glycyl lysine isopeptide (Lys-Gly) (interchain with G-Cter in ubiquitin). 2 positions are modified to phosphoserine: Ser723 and Ser730. LRR repeat units follow at residues 737–757, 766–787, 794–814, 823–844, and 851–871; these read NLTE…NVLC, NIRR…NISS, KLVE…RLLC, NLKK…DLAS, and SLTR…GILC. Positions 793–797 match the KFERQ-like motif 3 motif; sequence QKLVE. At Ser801 the chain carries Phosphoserine. Residues Cys832, Cys833, and Cys839 are each lipidated (S-palmitoyl cysteine). Tyr856 is modified (phosphotyrosine). Residue Lys873 forms a Glycyl lysine isopeptide (Lys-Gly) (interchain with G-Cter in ubiquitin) linkage. 4 LRR repeats span residues 880-901, 908-929, 937-958, and 965-986; these read NLQK…ALSS, NLTH…LLCE, KLQV…DLST, and SLRK…LLCE. Cys953 carries S-palmitoyl cysteine lipidation. Residue Lys968 forms a Glycyl lysine isopeptide (Lys-Gly) (interchain with G-Cter in ubiquitin) linkage. The short motif at 986-990 is the KFERQ-like motif 4 element; it reads EVLKQ. Ser1030 carries the post-translational modification Phosphoserine.

The protein belongs to the NLRP family. As to quaternary structure, sensor component of NLRP3 inflammasomes; inflammasomes are supramolecular complexes that assemble in the cytosol in response to pathogens and other damage-associated signals and play critical roles in innate immunity and inflammation. The core of NLRP3 inflammasomes consists of a signal sensor component (NLRP3), an adapter (PYCARD/ASC), which recruits an effector pro-inflammatory caspase (CASP1 and, possibly, CASP4 and CASP5). Homodecamer; inactive NLRP3 forms homodecameric double-ring cages that hide pyrin domains within NACHT-LRR rings to avoid premature activation. Interacts (via pyrin domain) with PYCARD/ASC (via pyrin domain); interaction is direct. Interacts (via LRR repeat domain) with NEK7 (via N-terminus); the interaction is required for the formation of the complex NLRP3:PYCARD, oligomerization of PYCARD/ASC and activation of CASP1. Interacts (via LRR repeat domain) with NR4A1/Nur77 (via N-terminus); the interaction is direct, requires activation of NR4A1 by its ligands NBRE-containing dsDNA and lipopolysaccharide, and stimulates the association of NLRP3 with NEK7 for non-canonical NLRP3 inflammasome activation. Interacts with CARD8; leading to inhibit formation of the NLRP3 inflammasome. Interacts with MEFV; this interaction targets NLRP3 to degradation by autophagy, hence preventing excessive IL1B- and IL18-mediated inflammation. Interacts with EIF2AK2/PKR; this interaction requires EIF2AK2 activity, is accompanied by EIF2AK2 autophosphorylation and promotes inflammasome assembly in response to specific stimuli. Interacts with GBP5 (via DAPIN domain); this interaction promotes inflammasome assembly in response to microbial and soluble, but not crystalline, agents. Interacts with PML (isoform PML-1) (via the leucine-rich repeat (LRR) domain); PML-mediated increase in NLRP3 inflammasome activation does not depend upon this interaction. Interacts (via NACHT domain) with DHX33 (via DEAH box); NLRP3 activation in presence of cytosolic dsRNA is mediated by DHX33. Interacts (via NACHT and LRR domains) with ARRB2; this interaction is direct and inducible by polyunsaturated fatty acids (PUFAs). Interacts (via NACHT domain) with DDX3X under both LPS-primed and inflammasome-activating conditions. Interacts with IRF4 (via the LRR domain); this interaction is direct and is required for optimal IRF4 binding to IL4 promoter and efficient IL4 transactivation during differentiation of Th2 helper T-cells. Interacts with MAVS; promoting localization to mitochondria and activation of the NLRP3 inflammasome. Interacts with MARK4; promoting localization of NLRP3 to the microtubule organizing center (MTOC). Interacts with TRIM50; this interaction also promotes NLRP3 oligomerization and subsequent inflammasome activation. Interacts with IRGM; preventing NLRP3 inflammasome assembly and promoting NLRP3 degradation. Interacts (via KFERQ-like motifs) with HSPA8/HSC70; promoting NLRP3 degradation by the chaperone-mediated autophagy pathway. Interacts (via NACHT and LLR domains) with ABHD8; this interaction is enhanced in the presence of NLRP3 inflammasome inducers, such as ATP, nigericin, silica, or alum. Interaction with ABHD8 leads the recruitment of ZDHHC12, hence facilitating NLRP3 palmitoylation and degradation by the chaperone-mediated autophagy pathway (CMA), therefore attenuating NLRP3 inflammasome activation. In terms of processing, phosphorylation at Ser-198 by MAPK8/JNK1 increases inflammasome activation by promoting deubiquitination by BRCC3 and NLRP3 homooligomerization. Phosphorylation at Ser-801 by CSNK1A1 prevents inflammasome activation by preventing NEK7 recruitment. Phosphorylation at Ser-5 in the pyrin domain inhibits homomultimerization of NLRP3 and activation of the NLRP3 inflammasome: dephosphorylation by protein phosphatase 2A (PP2A) promotes assembly of the NLRP3 inflammasome. Phosphorylation at Ser-292 by PKD/PRKD1 promotes NLRP3 inflammasome assembly. Phosphorylation by ERK1/MAPK3 promotes NLRP3 inflammasome assembly. Phosphorylation by BTK (at Tyr-131, Tyr-135 and Tyr-138) in the region that mediates binding to phosphatidylinositol phosphate, promotes relocalization of NLRP3 and assembly of the NLRP3 inflammasome. Phosphorylation at Tyr-856 inhibits NLRP3 inflammasome assembly: dephosphorylation by PTPN22 promotes inflammasome activation. Phosphorylated by LATS1 and LATS2 at Ser-262 following palmitoylation by ZDHHC1, promoting its relocalization to the microtubule organizing center (MTOC), where NLRP3 is activated by NEK7, leading to inflammasome assembly and activation. Ubiquitinated; undergoes both 'Lys-48'- and 'Lys-63'-linked polyubiquitination. Ubiquitination does not lead to degradation, but inhibits inflammasome activation. Deubiquitination is catalyzed by BRCC3 and associated with NLRP3 activation and inflammasome assembly. This process can be induced by the activation of Toll-like receptors (by LPS), through a non-transcriptional pathway dependent on the mitochondrial production of reactive oxygen species, and by ATP. Ubiquitinated by TRIM31 via 'Lys-48'-linked ubiquitination, leading to its degradation by the proteasome. Ubiquitinated at Lys-687 by the SCF(FBXL2) complex, leading to its degradation by the proteasome. Ubiquitinated by TRIM35 via 'lys-48' and 'Lys-63'-linked ubiquitination leading to inhibition of NLRP3 inflammasome activation. Undergoes 'Lys-27'-linked polyubiquitination by MARCHF5, leading to NLRP3-NEK7 complex formation and NLRP3 oligomerization. Post-translationally, palmitoylation by ZDHHC12 promotes NLRP3 degradation by the chaperone-mediated autophagy pathway (CMA) and therefore limits NLRP3 inflammasome activation. Interaction with ZDHHC12, and hence NLRP3 palmitoylation, is greatly enhanced by ABHD8. Following palmitoylation, HSPA8/HSC70 recognizes and binds the KFERQ-like motifs on NLRP3 and promotes NLRP3 recruitment to lysosomes, where it is degraded via the chaperone-mediated autophagy pathway in a LAMP2-dependent process. Palmitoylation at Cys-832 and Cys-833 by ZDHHC5 enhances its binding to NEK7 leading to inflammasome assembly and activation. Palmitoylation at Cys-125 and Cys-953 by ZDHHC1 facilitates phosphorylation at Ser-262 by LATS1 and LATS2, promoting its relocalization to the microtubule organizing center (MTOC), where NLRP3 is activated by NEK7, leading to inflammasome assembly and activation. Depalmitoylated by ABHD17A. In terms of processing, degraded via selective autophagy following interaction with IRGM. IRGM promotes NLRP3 recruitment to autophagosome membranes, promoting its SQSTM1/p62-dependent autophagy-dependent degradation.

It localises to the cytoplasm. The protein localises to the cytosol. The protein resides in the inflammasome. It is found in the cytoskeleton. Its subcellular location is the microtubule organizing center. It localises to the golgi apparatus membrane. The protein localises to the endoplasmic reticulum. The protein resides in the mitochondrion. It is found in the secreted. Its subcellular location is the nucleus. It catalyses the reaction ATP + H2O = ADP + phosphate + H(+). Its activity is regulated as follows. Under resting conditions, NLRP3 binds ADP and is autoinhibited. Inactive NLRP3 forms homodecameric double-ring cages that hide pyrin domains within NACHT-LRR rings to avoid premature activation. NLRP3 activation stimuli include extracellular ATP, nigericin, reactive oxygen species, crystals of monosodium urate or cholesterol, amyloid-beta fibers, environmental or industrial particles and nanoparticles, such as asbestos, silica, aluminum salts, cytosolic dsRNA, etc. Almost all stimuli trigger intracellular K(+) efflux. These stimuli lead to membrane perturbations that induce activation of NLRP3. Upon activation, NLRP3 is transported to microtubule organizing center (MTOC), where it is unlocked by NEK7, leading to its relocalization to dispersed trans-Golgi network (dTGN) vesicle membranes and recruitment of PYCARD/ASC for the formation of an active inflammasome complex. NEK7-activated NLRP3 forms a disk-shaped inflammasome. NLRP3 and PYCARD/ASC interact via their respective pyrin domains; interaction initiates speck formation (nucleation) which greatly enhances further addition of soluble PYCARD/ASC molecules to the speck in a prion-like polymerization process. Clustered PYCARD/ASC nucleates the formation of CASP1 filaments through the interaction of their respective CARD domains, acting as a platform for CASP1 polymerization and activation. Active CASP1 then processes IL1B and IL18 precursors, leading to the release of mature cytokines in the extracellular milieu and inflammatory response. NLRP3 inflammasome assembly is inhibited by IRGM, which impedes NLRP3 oligomerization. NLRP3 inflammasome is inhibited by cyclic AMP (cAMP), which directly binds NLRP3; inhibition is relieved by calcium-sensing receptor CASR, which inhibits production of cAMP. Specifically inhibited by sulfonylurea MCC950 (also named CP-456,773, CRID3), a potent and specific small-molecule inhibitor of the NLRP3 inflammasome that acts by preventing ATP hydrolysis. In terms of biological role, sensor component of the NLRP3 inflammasome, which mediates inflammasome activation in response to defects in membrane integrity, leading to secretion of inflammatory cytokines IL1B and IL18 and pyroptosis. In response to pathogens and other damage-associated signals that affect the integrity of membranes, initiates the formation of the inflammasome polymeric complex composed of NLRP3, CASP1 and PYCARD/ASC. Recruitment of pro-caspase-1 (proCASP1) to the NLRP3 inflammasome promotes caspase-1 (CASP1) activation, which subsequently cleaves and activates inflammatory cytokines IL1B and IL18 and gasdermin-D (GSDMD), promoting cytokine secretion and pyroptosis. Activation of NLRP3 inflammasome is also required for HMGB1 secretion; stimulating inflammatory responses. Under resting conditions, ADP-bound NLRP3 is autoinhibited. NLRP3 activation stimuli include extracellular ATP, nigericin, reactive oxygen species, crystals of monosodium urate or cholesterol, amyloid-beta fibers, environmental or industrial particles and nanoparticles, such as asbestos, silica, aluminum salts, cytosolic dsRNA, etc. Almost all stimuli trigger intracellular K(+) efflux. These stimuli lead to membrane perturbation and activation of NLRP3. Upon activation, NLRP3 is transported to microtubule organizing center (MTOC), where it is unlocked by NEK7, leading to its relocalization to dispersed trans-Golgi network (dTGN) vesicle membranes and formation of an active inflammasome complex. Associates with dTGN vesicle membranes by binding to phosphatidylinositol 4-phosphate (PtdIns4P). Shows ATPase activity. Its function is as follows. Independently of inflammasome activation, regulates the differentiation of T helper 2 (Th2) cells and has a role in Th2 cell-dependent asthma and tumor growth. During Th2 differentiation, required for optimal IRF4 binding to IL4 promoter and for IRF4-dependent IL4 transcription. Binds to the consensus DNA sequence 5'-GRRGGNRGAG-3'. May also participate in the transcription of IL5, IL13, GATA3, CCR3, CCR4 and MAF. The protein is NACHT, LRR and PYD domains-containing protein 3 (NLRP3) of Bos taurus (Bovine).